Consider the following 106-residue polypeptide: Acylphosphatase-2 (106 aa).

Residues 16-106 (SVDYEVFGTV…LEYSDFSIRY (91 aa)) form the Acylphosphatase-like domain. Active-site residues include R31 and N49. S100 is modified (phosphoserine).

This sequence belongs to the acylphosphatase family.

It carries out the reaction an acyl phosphate + H2O = a carboxylate + phosphate + H(+). The polypeptide is Acylphosphatase-2 (Acyp2) (Mus musculus (Mouse)).